The following is a 209-amino-acid chain: Molybdenum cofactor guanylyltransferase (209 aa).

Residues 13–15 (LAG), Lys26, Asn54, Asp72, and Asp107 contribute to the GTP site. Asp107 lines the Mg(2+) pocket.

The protein belongs to the MobA family. In terms of assembly, monomer. Mg(2+) serves as cofactor.

The protein resides in the cytoplasm. The catalysed reaction is Mo-molybdopterin + GTP + H(+) = Mo-molybdopterin guanine dinucleotide + diphosphate. In terms of biological role, transfers a GMP moiety from GTP to Mo-molybdopterin (Mo-MPT) cofactor (Moco or molybdenum cofactor) to form Mo-molybdopterin guanine dinucleotide (Mo-MGD) cofactor. In Nitrobacter hamburgensis (strain DSM 10229 / NCIMB 13809 / X14), this protein is Molybdenum cofactor guanylyltransferase.